The following is a 453-amino-acid chain: Choline kinase alpha (453 aa).

Residues 22–81 (CGGNAAPTPGVGQQRDAAGELESKQLGGRTQPLALPPPPPPPLPLPPPPSPPLADEQPEP) form a disordered region. The segment covering 55–73 (ALPPPPPPPLPLPPPPSPP) has biased composition (pro residues). The residue at position 71 (Ser-71) is a Phosphoserine. Residues 113–119 (RGGLSNM), Arg-142, and 203–209 (QFIPSRR) contribute to the ATP site. Position 115–117 (115–117 (GLS)) interacts with phosphocholine. An N6-acetyllysine modification is found at Lys-243. A Phosphoserine modification is found at Ser-275. ATP-binding residues include Gln-304 and Asp-326.

The protein belongs to the choline/ethanolamine kinase family. In terms of assembly, homodimer. Heterodimer with CHKB. Monomer; acetylation by KAT5 promotes dissociation of the homodimer and monomerization. Post-translationally, phosphorylated at Ser-275 by AMPK in response to glucose deprivation, leading to localization to lipid droplets. In terms of processing, acetylated by KAT5 at Lys-243 following phosphorylation by AMPK, leading to monomerization and conversion into a tyrosine-protein kinase. In terms of tissue distribution, expressed ubiquitously with the highest level in testis.

It is found in the cytoplasm. The protein localises to the cytosol. The protein resides in the lipid droplet. The catalysed reaction is choline + ATP = phosphocholine + ADP + H(+). The enzyme catalyses ethanolamine + ATP = phosphoethanolamine + ADP + H(+). It carries out the reaction L-tyrosyl-[protein] + ATP = O-phospho-L-tyrosyl-[protein] + ADP + H(+). The protein operates within phospholipid metabolism; phosphatidylcholine biosynthesis; phosphocholine from choline: step 1/1. It functions in the pathway phospholipid metabolism; phosphatidylethanolamine biosynthesis; phosphatidylethanolamine from ethanolamine: step 1/3. Functionally, plays a key role in phospholipid biosynthesis by catalyzing the phosphorylation of free choline to phosphocholine, the first step in phosphatidylcholine biosynthesis. Also phosphorylates ethanolamine, thereby contributing to phosphatidylethanolamine biosynthesis. Has higher activity with choline. In terms of biological role, this isoform plays a key role in lipolysis of lipid droplets following glucose deprivation. In response to glucose deprivation, phosphorylated by AMPK, promoting localization to lipid droplets. Phosphorylation is followed by acetylation by KAT5, leading to dissociation of the homodimer into a monomer. Monomeric CHKA isoform 1 is converted into a tyrosine-protein kinase, which phosphorylates lipid droplet structural proteins PLIN2 and PLIN3, leading to lipolysis of lipid droplets. The polypeptide is Choline kinase alpha (Chka) (Mus musculus (Mouse)).